A 376-amino-acid chain; its full sequence is Actin-like protein 53D (376 aa).

Positions 1–40 (MSSEVDSNSHHAAVVIDNGSGVCKAGFSPEDTPRAVFPSI) are necessary and sufficient for recruitment to the fusome and actin cones of spermatocyte cysts.

The protein belongs to the actin family. ARP1 subfamily. High expression in males whereas expression in females is very low. In adult males, highest levels of expression are in the testis. In adult females, expressed only in the ovaries at very low levels. In larvae, highly expressed in the imaginal disk whereas in prepupae and pupae modest levels of expression occur in the fat body.

Its subcellular location is the cytoplasm. It is found in the cytoskeleton. In terms of biological role, required for optimal embryo development, particularly under heat stress conditions. Also appears to have a role in negatively regulating spermatocyte cyst development. Under heat stress conditions, required for the correct organization and migration of nuclei during early embryogenesis, and therefore possibly functions by regulating embryonic actin networks during the heat stress response. The polypeptide is Actin-like protein 53D (Drosophila melanogaster (Fruit fly)).